A 136-amino-acid chain; its full sequence is UPF0102 protein BBta_0181 (136 aa).

Belongs to the UPF0102 family.

This chain is UPF0102 protein BBta_0181, found in Bradyrhizobium sp. (strain BTAi1 / ATCC BAA-1182).